The chain runs to 281 residues: MAWFKREKKGISTSTEEKKEAPDGLWNKCPNCKKALHSADLLENKYVCQYCNYHLRVGSKEYFQVLFDNNQFTELFPNLTSGDPLNFTDSKPYTERLIESMAKTGLKDAIRAAHGKIEGEDLVVACMDFNFIGGSMGSVVGEKIARSIDYSIKHKIPFLMISKSGGARMMEAAFSLMQMAKTSAKLALLSQAKIPYISLLTDPTTGGVTASYAMLGDINIAEPGSLIGFAGPRVIKETIKKDLPKGFQTAEFVLEHGFLDFIVDRRAMKAKLAAFLKMMKN.

The tract at residues 1-23 (MAWFKREKKGISTSTEEKKEAPD) is disordered. The CoA carboxyltransferase N-terminal domain maps to 25 to 281 (LWNKCPNCKK…LAAFLKMMKN (257 aa)). Cysteine 29, cysteine 32, cysteine 48, and cysteine 51 together coordinate Zn(2+). The C4-type zinc finger occupies 29 to 51 (CPNCKKALHSADLLENKYVCQYC).

Belongs to the AccD/PCCB family. As to quaternary structure, acetyl-CoA carboxylase is a heterohexamer composed of biotin carboxyl carrier protein (AccB), biotin carboxylase (AccC) and two subunits each of ACCase subunit alpha (AccA) and ACCase subunit beta (AccD). Requires Zn(2+) as cofactor.

Its subcellular location is the cytoplasm. The catalysed reaction is N(6)-carboxybiotinyl-L-lysyl-[protein] + acetyl-CoA = N(6)-biotinyl-L-lysyl-[protein] + malonyl-CoA. The protein operates within lipid metabolism; malonyl-CoA biosynthesis; malonyl-CoA from acetyl-CoA: step 1/1. Functionally, component of the acetyl coenzyme A carboxylase (ACC) complex. Biotin carboxylase (BC) catalyzes the carboxylation of biotin on its carrier protein (BCCP) and then the CO(2) group is transferred by the transcarboxylase to acetyl-CoA to form malonyl-CoA. The sequence is that of Acetyl-coenzyme A carboxylase carboxyl transferase subunit beta from Pedobacter heparinus (strain ATCC 13125 / DSM 2366 / CIP 104194 / JCM 7457 / NBRC 12017 / NCIMB 9290 / NRRL B-14731 / HIM 762-3).